Reading from the N-terminus, the 388-residue chain is F-box/LRR-repeat protein At3g59190 (388 aa).

The F-box domain maps to 11-64; that stretch reads KDIISNLPDALLCHVLSFLPTTEAASTSVLAKRWRFLLAFVPNLDLDNMIYDRP. LRR repeat units follow at residues 151-177, 180-205, 228-252, 313-345, and 346-371; these read KVSGTDEFTIDVGEFFLPKLKTLHLSA, FGDEGGPPFAKLISACHALEELVMIK, CENIDENPKSVSFDTPNLVYLEFTD, TMYLSSEALEVLTFCCKKAIPVFNNLIHLTVET, and DERVDWESLPILLKNCPNLETLIFEV.

The protein is F-box/LRR-repeat protein At3g59190 of Arabidopsis thaliana (Mouse-ear cress).